A 323-amino-acid polypeptide reads, in one-letter code: Olfactory receptor 1E2 (323 aa).

Topologically, residues 1-25 (MMGQNQTSISDFLLLGLPIQPEQQN) are extracellular. N-linked (GlcNAc...) asparagine glycosylation occurs at Asn5. A helical transmembrane segment spans residues 26–49 (LCYALFLAMYLTTLLGNLLIIVLI). Residues 50–57 (RLDSHLHT) lie on the Cytoplasmic side of the membrane. Residues 58–79 (PVYLFLSNLSFSDLCFSSVTMP) form a helical membrane-spanning segment. The Extracellular portion of the chain corresponds to 80–100 (KLLQNMQNQDPSIPYADCLTQ). Cys97 and Cys198 are joined by a disulfide. A helical membrane pass occupies residues 101–120 (MYFFLYFSDLESFLLVAMAY). Residues 121–148 (DRYVAICFPMHYTAICFLLHYTAIMSPM) lie on the Cytoplasmic side of the membrane. A helical transmembrane segment spans residues 149-167 (LCLSVVALSWVLTTFHAML). At 168–205 (HTLLMARLCFCADNVIPHFFCDMSALLKLACSDTRVNE) the chain is on the extracellular side. A helical transmembrane segment spans residues 206–228 (WVIFIMGGLILVIPFLLILGSYA). The Cytoplasmic portion of the chain corresponds to 229–245 (RIVSSILKVPSSKGICK). The chain crosses the membrane as a helical span at residues 246–269 (AFSTCGSHLSVVSLFYGTVIGLYL). Topologically, residues 270 to 281 (CPSANSSTLKDT) are extracellular. An N-linked (GlcNAc...) asparagine glycan is attached at Asn274. Residues 282-301 (VMAMMYTVVTPMLTPFIYSL) traverse the membrane as a helical segment. Residues 302–323 (RNRDMKGALERVICKRKNPFLL) are Cytoplasmic-facing.

Belongs to the G-protein coupled receptor 1 family.

The protein resides in the cell membrane. In terms of biological role, odorant receptor. The sequence is that of Olfactory receptor 1E2 (OR1E2) from Homo sapiens (Human).